The following is a 100-amino-acid chain: Large ribosomal subunit protein bL27 (100 aa).

Positions 1-13 (MNKLYWLTDLQLF) are excised as a propeptide. Residues 18–29 (GVDSSKNGRDSN) are compositionally biased toward basic and acidic residues. Positions 18-39 (GVDSSKNGRDSNPKYLGAKLGD) are disordered.

Belongs to the bacterial ribosomal protein bL27 family. Post-translationally, the N-terminus is cleaved by ribosomal processing cysteine protease Prp.

This Ureaplasma urealyticum serovar 10 (strain ATCC 33699 / Western) protein is Large ribosomal subunit protein bL27.